A 154-amino-acid polypeptide reads, in one-letter code: MKIYEGKLTAEGLKVGIIVSRFNEFITSKLLAGSIDCLKRHGAKEDNIEVCWVPGAFEIPVIAKKMASKGKYDAVICLGAVIRGATPHFDYVSSEVSKGVAHVSLDKEVPVIFGVLTTNTIEQAIERAGTKAGNKGYDAAMSAIEMSNLMKILD.

Residues phenylalanine 22, 56–58, and 80–82 contribute to the 5-amino-6-(D-ribitylamino)uracil site; these read AFE and AVI. 85–86 contributes to the (2S)-2-hydroxy-3-oxobutyl phosphate binding site; sequence AT. Histidine 88 serves as the catalytic Proton donor. Phenylalanine 113 lines the 5-amino-6-(D-ribitylamino)uracil pocket. Arginine 127 serves as a coordination point for (2S)-2-hydroxy-3-oxobutyl phosphate.

This sequence belongs to the DMRL synthase family.

It catalyses the reaction (2S)-2-hydroxy-3-oxobutyl phosphate + 5-amino-6-(D-ribitylamino)uracil = 6,7-dimethyl-8-(1-D-ribityl)lumazine + phosphate + 2 H2O + H(+). It participates in cofactor biosynthesis; riboflavin biosynthesis; riboflavin from 2-hydroxy-3-oxobutyl phosphate and 5-amino-6-(D-ribitylamino)uracil: step 1/2. In terms of biological role, catalyzes the formation of 6,7-dimethyl-8-ribityllumazine by condensation of 5-amino-6-(D-ribitylamino)uracil with 3,4-dihydroxy-2-butanone 4-phosphate. This is the penultimate step in the biosynthesis of riboflavin. In Clostridium botulinum (strain 657 / Type Ba4), this protein is 6,7-dimethyl-8-ribityllumazine synthase.